Consider the following 132-residue polypeptide: Small ribosomal subunit protein uS8c (132 aa).

This sequence belongs to the universal ribosomal protein uS8 family. Part of the 30S ribosomal subunit.

The protein resides in the plastid. The protein localises to the chloroplast. Its function is as follows. One of the primary rRNA binding proteins, it binds directly to 16S rRNA central domain where it helps coordinate assembly of the platform of the 30S subunit. The sequence is that of Small ribosomal subunit protein uS8c (rps8) from Dioscorea elephantipes (Elephant's foot yam).